The following is a 431-amino-acid chain: Tol-Pal system protein TolB (431 aa).

A signal peptide spans 1–26 (MSLMTKLGFRALVASCLITAGSAANA). The segment at 406-431 (DGSAPPQILSVQGGSVREPSWGPFMQ) is disordered.

This sequence belongs to the TolB family. In terms of assembly, the Tol-Pal system is composed of five core proteins: the inner membrane proteins TolA, TolQ and TolR, the periplasmic protein TolB and the outer membrane protein Pal. They form a network linking the inner and outer membranes and the peptidoglycan layer.

The protein resides in the periplasm. Functionally, part of the Tol-Pal system, which plays a role in outer membrane invagination during cell division and is important for maintaining outer membrane integrity. This is Tol-Pal system protein TolB from Burkholderia orbicola (strain MC0-3).